The primary structure comprises 182 residues: Ribosomal RNA small subunit methyltransferase G (182 aa).

S-adenosyl-L-methionine-binding positions include Gly-58, Phe-63, 109–110, and Arg-123; that span reads IE.

Belongs to the methyltransferase superfamily. RNA methyltransferase RsmG family.

The protein localises to the cytoplasm. It catalyses the reaction guanosine(527) in 16S rRNA + S-adenosyl-L-methionine = N(7)-methylguanosine(527) in 16S rRNA + S-adenosyl-L-homocysteine. Its function is as follows. Specifically methylates the N7 position of guanine in position 527 of 16S rRNA. This Campylobacter fetus subsp. fetus (strain 82-40) protein is Ribosomal RNA small subunit methyltransferase G.